Here is a 483-residue protein sequence, read N- to C-terminus: Regulatory protein ViaA (483 aa).

This sequence belongs to the ViaA family. Homodimer. Interacts with RavA.

It localises to the cytoplasm. Component of the RavA-ViaA chaperone complex, which may act on the membrane to optimize the function of some of the respiratory chains. ViaA stimulates the ATPase activity of RavA. The polypeptide is Regulatory protein ViaA (Escherichia coli O81 (strain ED1a)).